The following is a 337-amino-acid chain: DNA-directed RNA polymerase subunit alpha (337 aa).

The interval 1 to 223 is alpha N-terminal domain (alpha-NTD); sequence MLISQRPALT…ELFGLAQELN (223 aa). The tract at residues 238–337 is alpha C-terminal domain (alpha-CTD); the sequence is SEHIAAYSMP…IDTEGEDIAE (100 aa).

It belongs to the RNA polymerase alpha chain family. As to quaternary structure, homodimer. The RNAP catalytic core consists of 2 alpha, 1 beta, 1 beta' and 1 omega subunit. When a sigma factor is associated with the core the holoenzyme is formed, which can initiate transcription.

It carries out the reaction RNA(n) + a ribonucleoside 5'-triphosphate = RNA(n+1) + diphosphate. Functionally, DNA-dependent RNA polymerase catalyzes the transcription of DNA into RNA using the four ribonucleoside triphosphates as substrates. The chain is DNA-directed RNA polymerase subunit alpha from Corynebacterium jeikeium (strain K411).